Reading from the N-terminus, the 420-residue chain is 2',3'-cyclic-nucleotide 3'-phosphodiesterase (420 aa).

S9 bears the Phosphoserine mark. Y110 is modified (phosphotyrosine). Phosphoserine occurs at positions 169, 227, and 239. The Proton acceptor role is filled by H250. Residue T252 coordinates substrate. A Phosphothreonine modification is found at T262. H329 serves as the catalytic Proton donor. Position 331 (T331) interacts with substrate. S358 carries the post-translational modification Phosphoserine. Residue C417 is modified to Cysteine methyl ester. A lipid anchor (S-farnesyl cysteine) is attached at C417. The propeptide at 418–420 (TII) is removed in mature form.

It belongs to the 2H phosphoesterase superfamily. CNPase family. Exists as monomers and homodimers.

The protein resides in the membrane. It is found in the melanosome. It catalyses the reaction a nucleoside 2',3'-cyclic phosphate + H2O = a nucleoside 2'-phosphate + H(+). Its function is as follows. Catalyzes the formation of 2'-nucleotide products from 2',3'-cyclic substrates. May participate in RNA metabolism in the myelinating cell, CNP is the third most abundant protein in central nervous system myelin. The sequence is that of 2',3'-cyclic-nucleotide 3'-phosphodiesterase from Rattus norvegicus (Rat).